The sequence spans 529 residues: Ribonuclease Y (529 aa).

The chain crosses the membrane as a helical span at residues 4 to 24 (GLIYISLEVLVACLITALIMY). Positions 216–297 (LTSRIALPCS…NRIEEVYHRV (82 aa)) constitute a KH domain. The HD domain maps to 342-435 (ALQHSKEVAL…VCAADALSAG (94 aa)).

The protein belongs to the RNase Y family.

Its subcellular location is the cell membrane. In terms of biological role, endoribonuclease that initiates mRNA decay. The protein is Ribonuclease Y of Helicobacter pylori (strain J99 / ATCC 700824) (Campylobacter pylori J99).